We begin with the raw amino-acid sequence, 241 residues long: Carboxy-S-adenosyl-L-methionine synthase (241 aa).

Residues Tyr-38, 63–65 (GCS), 88–89 (DN), 116–117 (DI), Asn-131, and Arg-198 each bind S-adenosyl-L-methionine.

It belongs to the class I-like SAM-binding methyltransferase superfamily. Cx-SAM synthase family. As to quaternary structure, homodimer.

The catalysed reaction is prephenate + S-adenosyl-L-methionine = carboxy-S-adenosyl-L-methionine + 3-phenylpyruvate + H2O. In terms of biological role, catalyzes the conversion of S-adenosyl-L-methionine (SAM) to carboxy-S-adenosyl-L-methionine (Cx-SAM). The protein is Carboxy-S-adenosyl-L-methionine synthase of Haemophilus influenzae (strain PittGG).